The primary structure comprises 508 residues: Inosine-5'-monophosphate dehydrogenase (508 aa).

CBS domains lie at 111 to 170 (FITD…EITL) and 174 to 230 (MTTN…PDAS). Residues D267 and 317–319 (GMG) each bind NAD(+). 2 residues coordinate K(+): G319 and G321. IMP is bound at residue S322. C324 is a K(+) binding site. The active-site Thioimidate intermediate is the C324. IMP-binding positions include 357–359 (DGG), 380–381 (GF), and 404–408 (YRGMA). R420 serves as the catalytic Proton acceptor. Q432 contributes to the IMP binding site. K(+) is bound at residue G492.

This sequence belongs to the IMPDH/GMPR family. Homotetramer. It depends on K(+) as a cofactor.

The catalysed reaction is IMP + NAD(+) + H2O = XMP + NADH + H(+). It participates in purine metabolism; XMP biosynthesis via de novo pathway; XMP from IMP: step 1/1. With respect to regulation, mycophenolic acid (MPA) is a non-competitive inhibitor that prevents formation of the closed enzyme conformation by binding to the same site as the amobile flap. In contrast, mizoribine monophosphate (MZP) is a competitive inhibitor that induces the closed conformation. MPA is a potent inhibitor of mammalian IMPDHs but a poor inhibitor of the bacterial enzymes. MZP is a more potent inhibitor of bacterial IMPDH. Its function is as follows. Catalyzes the conversion of inosine 5'-phosphate (IMP) to xanthosine 5'-phosphate (XMP), the first committed and rate-limiting step in the de novo synthesis of guanine nucleotides, and therefore plays an important role in the regulation of cell growth. The protein is Inosine-5'-monophosphate dehydrogenase of Leptospira interrogans serogroup Icterohaemorrhagiae serovar Lai (strain 56601).